The following is an 835-amino-acid chain: Protein translocase subunit SecA 1 (835 aa).

ATP-binding positions include Gln-85, 103–107 (GEGKT), and Asp-492. Residues 788–807 (VQGEAVHPSSDGEEAKKKPV) form a disordered region. The Zn(2+) site is built by Cys-819, Cys-821, Cys-830, and Cys-831.

This sequence belongs to the SecA family. Monomer and homodimer. Part of the essential Sec protein translocation apparatus which comprises SecA, SecYEG and auxiliary proteins SecDF. Other proteins may also be involved. It depends on Zn(2+) as a cofactor.

Its subcellular location is the cell membrane. The protein resides in the cytoplasm. It carries out the reaction ATP + H2O + cellular proteinSide 1 = ADP + phosphate + cellular proteinSide 2.. Part of the Sec protein translocase complex. Interacts with the SecYEG preprotein conducting channel. Has a central role in coupling the hydrolysis of ATP to the transfer of proteins into and across the cell membrane, serving as an ATP-driven molecular motor driving the stepwise translocation of polypeptide chains across the membrane. The protein is Protein translocase subunit SecA 1 of Bacillus thuringiensis subsp. konkukian (strain 97-27).